Consider the following 234-residue polypeptide: MNDGVSTPVWLHIGPLEIHETVVTTWLIMLVLVVASILLTRRLSLQPGRLQAMLEGVVLTLESAIANADSRNARRLLPLIGTFWIFLPVANLLGVIPGMHSPTRDLSVTAALALVVFFAVHAYGVRQSGLGYFKHYLSPSPILLPFHIISEFTRTVALAIRLFGNIMSLEMAALLILLVAGFLAPVPILMLHIIEALVQAYIFGMLALIYVAGAMQQTTESPITSSSRSTSGAP.

5 helical membrane passes run 20 to 40 (ETVVTTWLIMLVLVVASILLT), 76 to 96 (LLPLIGTFWIFLPVANLLGVI), 105 to 125 (DLSVTAALALVVFFAVHAYGV), 162 to 184 (LFGNIMSLEMAALLILLVAGFLA), and 195 to 215 (EALVQAYIFGMLALIYVAGAM).

This sequence belongs to the ATPase A chain family. In terms of assembly, F-type ATPases have 2 components, CF(1) - the catalytic core - and CF(0) - the membrane proton channel. CF(1) has five subunits: alpha(3), beta(3), gamma(1), delta(1), epsilon(1). CF(0) has three main subunits: a(1), b(2) and c(9-12). The alpha and beta chains form an alternating ring which encloses part of the gamma chain. CF(1) is attached to CF(0) by a central stalk formed by the gamma and epsilon chains, while a peripheral stalk is formed by the delta and b chains.

It localises to the cell inner membrane. Functionally, key component of the proton channel; it plays a direct role in the translocation of protons across the membrane. This is ATP synthase subunit a 1 from Hahella chejuensis (strain KCTC 2396).